The primary structure comprises 239 residues: Ribosomal RNA small subunit methyltransferase G (239 aa).

Residues G77, F82, 128–129, and R147 contribute to the S-adenosyl-L-methionine site; that span reads AE. The tract at residues 216-239 is disordered; sequence KKQSQTPKKFPRKPGTPNKSPIEG.

This sequence belongs to the methyltransferase superfamily. RNA methyltransferase RsmG family.

Its subcellular location is the cytoplasm. Its function is as follows. Specifically methylates the N7 position of guanine in position 535 of 16S rRNA. The sequence is that of Ribosomal RNA small subunit methyltransferase G from Bacillus licheniformis (strain ATCC 14580 / DSM 13 / JCM 2505 / CCUG 7422 / NBRC 12200 / NCIMB 9375 / NCTC 10341 / NRRL NRS-1264 / Gibson 46).